The chain runs to 335 residues: Glucokinase (335 aa).

11-16 (ADIGGT) lines the ATP pocket.

It belongs to the bacterial glucokinase family.

It localises to the cytoplasm. The catalysed reaction is D-glucose + ATP = D-glucose 6-phosphate + ADP + H(+). This is Glucokinase from Xanthomonas oryzae pv. oryzae (strain MAFF 311018).